The sequence spans 91 residues: Small ribosomal subunit protein uS19 (91 aa).

This sequence belongs to the universal ribosomal protein uS19 family.

In terms of biological role, protein S19 forms a complex with S13 that binds strongly to the 16S ribosomal RNA. This is Small ribosomal subunit protein uS19 from Lactiplantibacillus plantarum (strain ATCC BAA-793 / NCIMB 8826 / WCFS1) (Lactobacillus plantarum).